The primary structure comprises 261 residues: (3R)-3-hydroxyacyl-CoA dehydrogenase (261 aa).

Residues 15–23 and 42–43 each bind NAD(+); these read LVTGAGSGI and DL. S60 is modified (phosphoserine). 74-76 lines the NAD(+) pocket; that stretch reads ADV. S156 contacts substrate. An N6-succinyllysine modification is found at K160. Y169 acts as the Proton acceptor in catalysis. Residues 169–173 and 202–204 contribute to the NAD(+) site; these read YAASK and IAT. K173 bears the N6-succinyllysine mark.

The protein belongs to the short-chain dehydrogenases/reductases (SDR) family. As to quaternary structure, heterotetramer with CBR4; contains two molecules of HSD17B8 and CBR4. As to expression, widely expressed, particularly abundant in prostate, placenta and kidney. Expressed at protein level in various tissues like brain, cerebellum, heart, lung, kidney, ovary, testis, adrenals and prostate.

It localises to the mitochondrion matrix. The enzyme catalyses a (3R)-3-hydroxyacyl-CoA + NAD(+) = a 3-oxoacyl-CoA + NADH + H(+). It carries out the reaction 17beta-estradiol + NAD(+) = estrone + NADH + H(+). The catalysed reaction is testosterone + NAD(+) = androst-4-ene-3,17-dione + NADH + H(+). It catalyses the reaction 17beta-hydroxy-5alpha-androstan-3-one + NAD(+) = 5alpha-androstan-3,17-dione + NADH + H(+). Its pathway is steroid biosynthesis; estrogen biosynthesis. The protein operates within lipid metabolism; fatty acid biosynthesis. It functions in the pathway lipid metabolism; mitochondrial fatty acid beta-oxidation. Its function is as follows. Required for the solubility and assembly of the heterotetramer 3-ketoacyl-[acyl carrier protein] (ACP) reductase functional complex (KAR or KAR1) that forms part of the mitochondrial fatty acid synthase (mtFAS). Alpha-subunit of the KAR complex that acts as a scaffold protein required for the stability of carbonyl reductase type-4 (CBR4, beta-subunit of the KAR complex) and for its 3-ketoacyl-ACP reductase activity, thereby participating in mitochondrial fatty acid biosynthesis. Catalyzes the NAD-dependent conversion of (3R)-3-hydroxyacyl-CoA into 3-ketoacyl-CoA (3-oxoacyl-CoA) with no chain length preference; this enzymatic activity is not needed for the KAR function. Prefers (3R)-3-hydroxyacyl-CoA over (3S)-3-hydroxyacyl-CoA and displays enzymatic activity only in the presence of NAD(+). Cooperates with enoyl-CoA hydratase 1 in mitochondria, together they constitute an alternative route to the auxiliary enzyme pathways for the breakdown of Z-PUFA (cis polyunsaturated fatty acid) enoyl-esters. NAD-dependent 17-beta-hydroxysteroid dehydrogenase with highest activity towards estradiol (17beta-estradiol or E2). Has very low activity towards testosterone and dihydrotestosterone (17beta-hydroxy-5alpha-androstan-3-one). Primarily an oxidative enzyme, it can switch to a reductive mode determined in the appropriate physiologic milieu and catalyze the reduction of estrone (E1) to form biologically active 17beta-estradiol. In Homo sapiens (Human), this protein is (3R)-3-hydroxyacyl-CoA dehydrogenase (HSD17B8).